A 269-amino-acid chain; its full sequence is Type II iodothyronine deiodinase (269 aa).

Residues 1 to 9 (MGILSVDLL) lie on the Lumenal side of the membrane. The helical; Signal-anchor for type III membrane protein transmembrane segment at 10–34 (ITLQILPVFFSNCLFLALYDSVILL) threads the bilayer. Topologically, residues 35–269 (KHVVLLLSRS…KNFSKRUKKT (235 aa)) are cytoplasmic. Residue Sec-133 is part of the active site. Residues Sec-133 and Sec-266 are each a non-standard amino acid (selenocysteine).

Belongs to the iodothyronine deiodinase family. In terms of assembly, predominantly monomer. Can form homodimers but homodimerization is not essential for enzyme activity. Interacts with USP20 and USP33. Interacts with MARCHF6. Post-translationally, ubiquitinated by MARCHF6, leading to its degradation by the proteasome. Deubiquitinated by USP20 and USP33. In terms of tissue distribution, more expressed in pituitary than in brain, low to undetectable levels in thyroid and skeletal muscle.

It is found in the endoplasmic reticulum membrane. The catalysed reaction is 3,3',5-triiodo-L-thyronine + iodide + A + H(+) = L-thyroxine + AH2. The enzyme catalyses 3,3'-diiodo-L-thyronine + iodide + A + H(+) = 3,3',5'-triiodo-L-thyronine + AH2. It catalyses the reaction 3'-iodo-L-thyronine + iodide + A + H(+) = 3',5'-diiodo-L-thyronine + AH2. It carries out the reaction 3,3'-diiodothyronamine + iodide + A + H(+) = 3,3',5'-triiodothyronamine + AH2. The catalysed reaction is 3'-iodothyronamine + iodide + A + H(+) = 3',5'-diiodothyronamine + AH2. Its function is as follows. Plays a crucial role in the metabolism of thyroid hormones (TH) and has specific roles in TH activation and inactivation by deiodination.Catalyzes the deiodination of L-thyroxine (T4) to 3,5,3'-triiodothyronine (T3) and 3,3',5'-triiodothyronine (rT3) to 3,3'-diiodothyronine (3,3'-T2) via outer-ring deiodination (ORD). Catalyzes the deiodination of 3',5'-diiodothyronine (3',5'-T2) to 3'-monoiodothyronine (3'-T1) via ORD. Catalyzes the phenolic ring deiodinations of 3,3',5'-triiodothyronamine and 3',5'- diiodothyronamine. The sequence is that of Type II iodothyronine deiodinase (DIO2) from Sus scrofa (Pig).